A 431-amino-acid chain; its full sequence is Enolase (431 aa).

(2R)-2-phosphoglycerate is bound at residue glutamine 167. Glutamate 209 functions as the Proton donor in the catalytic mechanism. Mg(2+) contacts are provided by aspartate 246, glutamate 290, and aspartate 317. (2R)-2-phosphoglycerate contacts are provided by lysine 342, arginine 371, serine 372, and lysine 393. Residue lysine 342 is the Proton acceptor of the active site.

Belongs to the enolase family. As to quaternary structure, component of the RNA degradosome, a multiprotein complex involved in RNA processing and mRNA degradation. The cofactor is Mg(2+).

It is found in the cytoplasm. It localises to the secreted. The protein resides in the cell surface. The catalysed reaction is (2R)-2-phosphoglycerate = phosphoenolpyruvate + H2O. It functions in the pathway carbohydrate degradation; glycolysis; pyruvate from D-glyceraldehyde 3-phosphate: step 4/5. Its function is as follows. Catalyzes the reversible conversion of 2-phosphoglycerate (2-PG) into phosphoenolpyruvate (PEP). It is essential for the degradation of carbohydrates via glycolysis. The chain is Enolase from Pectobacterium atrosepticum (strain SCRI 1043 / ATCC BAA-672) (Erwinia carotovora subsp. atroseptica).